The sequence spans 105 residues: Small cysteine and glycine repeat-containing protein 6 (105 aa).

The 13 X 2 AA repeats of CG stretch occupies residues 4 to 83; that stretch reads CGCGGCGGGC…HSCGCGCGCG (80 aa).

It belongs to the KRTAP type 28 family.

Its function is as follows. In the hair cortex, hair keratin intermediate filaments are embedded in an interfilamentous matrix, consisting of hair keratin-associated proteins (KRTAP), which are essential for the formation of a rigid and resistant hair shaft through their extensive disulfide bond cross-linking with abundant cysteine residues of hair keratins. The matrix proteins include the high-sulfur and high-glycine-tyrosine keratins. This Homo sapiens (Human) protein is Small cysteine and glycine repeat-containing protein 6.